Consider the following 295-residue polypeptide: Protoheme IX farnesyltransferase 2 (295 aa).

Helical transmembrane passes span 9-29 (ITKP…FFLA), 36-56 (LAVF…GCVF), 80-100 (LISL…GVAL), 108-128 (LAAL…SLYL), 135-155 (GTLV…VAVT), 163-183 (LTLL…IAIF), 209-229 (ILIY…SGYA), 230-250 (GMSY…MAWT), and 265-285 (FVFS…DFKV).

The protein belongs to the UbiA prenyltransferase family. Protoheme IX farnesyltransferase subfamily.

Its subcellular location is the cell inner membrane. It carries out the reaction heme b + (2E,6E)-farnesyl diphosphate + H2O = Fe(II)-heme o + diphosphate. It participates in porphyrin-containing compound metabolism; heme O biosynthesis; heme O from protoheme: step 1/1. Converts heme B (protoheme IX) to heme O by substitution of the vinyl group on carbon 2 of heme B porphyrin ring with a hydroxyethyl farnesyl side group. The polypeptide is Protoheme IX farnesyltransferase 2 (Pseudomonas fluorescens (strain Pf0-1)).